Consider the following 410-residue polypeptide: Tryptophan synthase beta chain (410 aa).

Lys-99 is subject to N6-(pyridoxal phosphate)lysine.

Belongs to the TrpB family. Tetramer of two alpha and two beta chains. Requires pyridoxal 5'-phosphate as cofactor.

It catalyses the reaction (1S,2R)-1-C-(indol-3-yl)glycerol 3-phosphate + L-serine = D-glyceraldehyde 3-phosphate + L-tryptophan + H2O. It functions in the pathway amino-acid biosynthesis; L-tryptophan biosynthesis; L-tryptophan from chorismate: step 5/5. Its function is as follows. The beta subunit is responsible for the synthesis of L-tryptophan from indole and L-serine. This Pseudomonas fluorescens (strain Pf0-1) protein is Tryptophan synthase beta chain.